The sequence spans 403 residues: S-adenosylmethionine synthase (403 aa).

Histidine 17 is an ATP binding site. Mg(2+) is bound at residue aspartate 19. Glutamate 45 contributes to the K(+) binding site. Residues glutamate 58 and glutamine 104 each coordinate L-methionine. The tract at residues 104-114 (QSPDIAQGVDT) is flexible loop. Residues 179-181 (DGK), 250-251 (KF), aspartate 259, 265-266 (RK), alanine 282, and lysine 286 each bind ATP. Residue aspartate 259 participates in L-methionine binding. An L-methionine-binding site is contributed by lysine 290.

It belongs to the AdoMet synthase family. Homotetramer; dimer of dimers. It depends on Mg(2+) as a cofactor. Requires K(+) as cofactor.

The protein localises to the cytoplasm. It carries out the reaction L-methionine + ATP + H2O = S-adenosyl-L-methionine + phosphate + diphosphate. It functions in the pathway amino-acid biosynthesis; S-adenosyl-L-methionine biosynthesis; S-adenosyl-L-methionine from L-methionine: step 1/1. Its function is as follows. Catalyzes the formation of S-adenosylmethionine (AdoMet) from methionine and ATP. The overall synthetic reaction is composed of two sequential steps, AdoMet formation and the subsequent tripolyphosphate hydrolysis which occurs prior to release of AdoMet from the enzyme. The protein is S-adenosylmethionine synthase of Mycobacterium bovis (strain ATCC BAA-935 / AF2122/97).